Consider the following 64-residue polypeptide: MAQEQTKRGGGGGEDDDLSGGAGAGQERREKLAEETDDLLDEIDDVLEENAEDFVRAYVQKGGQ.

A disordered region spans residues 1-37 (MAQEQTKRGGGGGEDDDLSGGAGAGQERREKLAEETD). Residues 21–58 (GAGAGQERREKLAEETDDLLDEIDDVLEENAEDFVRAY) are ARC ATPase binding. Residues 24–52 (AGQERREKLAEETDDLLDEIDDVLEENAE) adopt a coiled-coil conformation. A Deamidated glutamine modification is found at glutamine 64. Residue glutamine 64 forms an Isoglutamyl lysine isopeptide (Gln-Lys) (interchain with K-? in acceptor proteins) linkage.

It belongs to the prokaryotic ubiquitin-like protein family. In terms of assembly, strongly interacts with the proteasome-associated ATPase ARC through a hydrophobic interface; the interacting region of Pup lies in its C-terminal half. There is one Pup binding site per ARC hexamer ring. Post-translationally, is modified by deamidation of its C-terminal glutamine to glutamate by the deamidase Dop, a prerequisite to the subsequent pupylation process.

It participates in protein degradation; proteasomal Pup-dependent pathway. Protein modifier that is covalently attached to lysine residues of substrate proteins, thereby targeting them for proteasomal degradation. The tagging system is termed pupylation. This Mycobacterium sp. (strain JLS) protein is Prokaryotic ubiquitin-like protein Pup.